Reading from the N-terminus, the 380-residue chain is Cytochrome b (380 aa).

The next 4 membrane-spanning stretches (helical) occupy residues 33-53 (FGSL…FLAM), 77-98 (WLIR…FIHV), 113-133 (WNIG…GYVL), and 178-198 (FFAF…VHLL). Positions 83 and 97 each coordinate heme b. Residues histidine 182 and histidine 196 each coordinate heme b. Histidine 201 serves as a coordination point for a ubiquinone. 4 helical membrane-spanning segments follow: residues 226–246 (IKDL…VLFF), 288–308 (LGGV…PLLN), 320–340 (ITQA…WIGG), and 347–367 (FTLI…IFMP).

The protein belongs to the cytochrome b family. As to quaternary structure, the cytochrome bc1 complex contains 11 subunits: 3 respiratory subunits (MT-CYB, CYC1 and UQCRFS1), 2 core proteins (UQCRC1 and UQCRC2) and 6 low-molecular weight proteins (UQCRH/QCR6, UQCRB/QCR7, UQCRQ/QCR8, UQCR10/QCR9, UQCR11/QCR10 and a cleavage product of UQCRFS1). This cytochrome bc1 complex then forms a dimer. Heme b is required as a cofactor.

The protein resides in the mitochondrion inner membrane. Functionally, component of the ubiquinol-cytochrome c reductase complex (complex III or cytochrome b-c1 complex) that is part of the mitochondrial respiratory chain. The b-c1 complex mediates electron transfer from ubiquinol to cytochrome c. Contributes to the generation of a proton gradient across the mitochondrial membrane that is then used for ATP synthesis. The protein is Cytochrome b (MT-CYB) of Rhipidomys wetzeli (Wetzel's climbing mouse).